Consider the following 401-residue polypeptide: MSKLVLILNCGSSSLKFAILDPATGEEKLSGLAEAFFLPEARIKWKLNGEKGNADLGAGAAHTEALNFIASNILTDELKNSIAAIGHRIVHGGEKYTQSVIVTDEVVKGIEDAAQFAPLHNPAHLIGIREAFNAFPHLKDKNVVVFDTAFHQTMSEEAFLYALPYSLYKEHGVRRYGAHGTSHYFISREVAEYVGKPADQVNAIICHLGNGGSVSVVRNGQCIDTSMGLTPLEGLVMGTRCGDIDPAIVFYLYKTLGMSMEQIEETLVKKSGLLGLTEVTSDCRYAEDNYDNASKPEAKRALNVYSYRLAKYIGAYMAVLGDDHLDAIAFTGGIGENSAHVRELALNHLKLFGIKIDNERNLAARFGKDGVITTDDSAFKAIVLPTNEELVIAQDTARLCF.

Mg(2+) is bound at residue asparagine 9. Lysine 16 is an ATP binding site. Arginine 88 contacts substrate. Residue aspartate 147 is the Proton donor/acceptor of the active site. ATP-binding positions include 207 to 211, 282 to 284, and 333 to 337; these read HLGNG, DCR, and GIGEN. Residue glutamate 388 coordinates Mg(2+).

This sequence belongs to the acetokinase family. Homodimer. Mg(2+) is required as a cofactor. Requires Mn(2+) as cofactor.

The protein localises to the cytoplasm. It carries out the reaction acetate + ATP = acetyl phosphate + ADP. The protein operates within metabolic intermediate biosynthesis; acetyl-CoA biosynthesis; acetyl-CoA from acetate: step 1/2. Its function is as follows. Catalyzes the formation of acetyl phosphate from acetate and ATP. Can also catalyze the reverse reaction. The protein is Acetate kinase of Haemophilus influenzae (strain 86-028NP).